The primary structure comprises 364 residues: Protein trichome birefringence-like 40 (364 aa).

Residues 9–25 form a helical; Signal-anchor for type II membrane protein membrane-spanning segment; sequence LASLSLILFSSFPGLLA. A GDS motif motif is present at residues 118–120; it reads GDS. The DCXHWCLPGXXDXWN motif motif lies at 341–355; sequence DCSHWCLPGLPDTWN.

The protein belongs to the PC-esterase family. TBL subfamily.

It is found in the membrane. May act as a bridging protein that binds pectin and other cell wall polysaccharides. Probably involved in maintaining esterification of pectins. May be involved in the specific O-acetylation of cell wall polymers. The polypeptide is Protein trichome birefringence-like 40 (TBL40) (Arabidopsis thaliana (Mouse-ear cress)).